A 251-amino-acid chain; its full sequence is Extracellular superoxide dismutase [Cu-Zn] (251 aa).

An N-terminal signal peptide occupies residues 1–15 (MLAFLFYGLLLAACG). Residues 16–24 (SVTMSNPGE) constitute a propeptide that is removed on maturation. Disulfide bonds link Cys-77-Cys-222 and Cys-139-Cys-221. N-linked (GlcNAc...) asparagine glycosylation occurs at Asn-121. The Cu cation site is built by His-128, His-130, and His-145. 4 residues coordinate Zn(2+): His-145, His-153, His-156, and Asp-159. Cu cation is bound at residue His-195. Residues 230-251 (AAWESQTKERKKRRRESECKTT) are disordered.

The protein belongs to the Cu-Zn superoxide dismutase family. In terms of assembly, homotetramer. Directly interacts with ATP7A/MNK; this interaction is copper-dependent and is required for SOD3 activity. Cu cation is required as a cofactor. It depends on Zn(2+) as a cofactor.

Its subcellular location is the secreted. It localises to the extracellular space. The protein resides in the golgi apparatus. The protein localises to the trans-Golgi network. It carries out the reaction 2 superoxide + 2 H(+) = H2O2 + O2. Protect the extracellular space from toxic effect of reactive oxygen intermediates by converting superoxide radicals into hydrogen peroxide and oxygen. The chain is Extracellular superoxide dismutase [Cu-Zn] (Sod3) from Mus musculus (Mouse).